Here is a 421-residue protein sequence, read N- to C-terminus: UDP-N-acetylglucosamine 1-carboxyvinyltransferase (421 aa).

A phosphoenolpyruvate-binding site is contributed by 22–23; that stretch reads KN. Arg93 lines the UDP-N-acetyl-alpha-D-glucosamine pocket. The active-site Proton donor is Cys117. At Cys117 the chain carries 2-(S-cysteinyl)pyruvic acid O-phosphothioketal. UDP-N-acetyl-alpha-D-glucosamine contacts are provided by residues 122 to 126, Asp308, and Ile330; that span reads RPVDL.

This sequence belongs to the EPSP synthase family. MurA subfamily.

The protein localises to the cytoplasm. It carries out the reaction phosphoenolpyruvate + UDP-N-acetyl-alpha-D-glucosamine = UDP-N-acetyl-3-O-(1-carboxyvinyl)-alpha-D-glucosamine + phosphate. It participates in cell wall biogenesis; peptidoglycan biosynthesis. In terms of biological role, cell wall formation. Adds enolpyruvyl to UDP-N-acetylglucosamine. This chain is UDP-N-acetylglucosamine 1-carboxyvinyltransferase, found in Pseudomonas fluorescens (strain SBW25).